The chain runs to 127 residues: Major sperm protein 77/79 (127 aa).

Ala-2 is subject to N-acetylalanine. Residues 9–126 enclose the MSP domain; sequence DIQTQPGTKI…RRKNLPIEYN (118 aa).

In terms of tissue distribution, sperm.

Its subcellular location is the cell projection. The protein localises to the pseudopodium. It is found in the cytoplasm. It localises to the cytoskeleton. Functionally, central component in molecular interactions underlying sperm crawling. Forms an extensive filament system that extends from sperm villipoda, along the leading edge of the pseudopod. This is Major sperm protein 77/79 (msp-77) from Caenorhabditis elegans.